The chain runs to 204 residues: Peptide deformylase (204 aa).

Residues Cys-131 and His-174 each contribute to the Fe cation site. Glu-175 is a catalytic residue. His-178 is a binding site for Fe cation.

The protein belongs to the polypeptide deformylase family. It depends on Fe(2+) as a cofactor.

It catalyses the reaction N-terminal N-formyl-L-methionyl-[peptide] + H2O = N-terminal L-methionyl-[peptide] + formate. In terms of biological role, removes the formyl group from the N-terminal Met of newly synthesized proteins. Requires at least a dipeptide for an efficient rate of reaction. N-terminal L-methionine is a prerequisite for activity but the enzyme has broad specificity at other positions. In Streptococcus equi subsp. zooepidemicus (strain H70), this protein is Peptide deformylase.